The chain runs to 293 residues: MASQVNALLLPVIESTPLHQITKVALTTTLTSKQSDYKFKEIAVPLTKSLQLYEKAQRRQDLRASLKALESIIYQTHFQWNNPLPRHAHLFQKHYHFLLTHWPFENHRDLVDSIAVNNGKLNSTSSRSVWLKADWITLFNVKNPWVQTPPSLMRLSGTDLDTFTPERIFLINSLGNHYKFLIANSHLSYNHKKYPSPGVQIPVRNALGEVSPAKQIAQLFARQLSHIYKSLFIENPPLSPENELALTAVFYDETVERRLRRLYMRACARAYTTTNADSTTEPLMFHCTRWEVD.

It belongs to the GEP5 family.

It localises to the mitochondrion. Functionally, essential for respiratory growth and required for maintenance of mtDNA. Required for cell survival in the absence of prohibitins. In Saccharomyces cerevisiae (strain ATCC 204508 / S288c) (Baker's yeast), this protein is Genetic interactor of prohibitin 5, mitochondrial (GEP5).